The following is a 112-amino-acid chain: T cell receptor alpha variable 9-1 (112 aa).

The first 20 residues, 1 to 20 (MNSSPGPAIALFLMFGGING), serve as a signal peptide directing secretion. Residues 21 to 112 (DSVVQTEGQV…DSAVYFCALS (92 aa)) enclose the Ig-like domain. An N-linked (GlcNAc...) asparagine glycan is attached at Asn41. The cysteines at positions 42 and 109 are disulfide-linked.

In terms of assembly, alpha-beta TR is a heterodimer composed of an alpha and beta chain; disulfide-linked. The alpha-beta TR is associated with the transmembrane signaling CD3 coreceptor proteins to form the TR-CD3 (TcR or TCR). The assembly of alpha-beta TR heterodimers with CD3 occurs in the endoplasmic reticulum where a single alpha-beta TR heterodimer associates with one CD3D-CD3E heterodimer, one CD3G-CD3E heterodimer and one CD247 homodimer forming a stable octameric structure. CD3D-CD3E and CD3G-CD3E heterodimers preferentially associate with TR alpha and TR beta chains, respectively. The association of the CD247 homodimer is the last step of TcR assembly in the endoplasmic reticulum and is required for transport to the cell surface.

It is found in the cell membrane. Functionally, v region of the variable domain of T cell receptor (TR) alpha chain that participates in the antigen recognition. Alpha-beta T cell receptors are antigen specific receptors which are essential to the immune response and are present on the cell surface of T lymphocytes. Recognize peptide-major histocompatibility (MH) (pMH) complexes that are displayed by antigen presenting cells (APC), a prerequisite for efficient T cell adaptive immunity against pathogens. Binding of alpha-beta TR to pMH complex initiates TR-CD3 clustering on the cell surface and intracellular activation of LCK that phosphorylates the ITAM motifs of CD3G, CD3D, CD3E and CD247 enabling the recruitment of ZAP70. In turn ZAP70 phosphorylates LAT, which recruits numerous signaling molecules to form the LAT signalosome. The LAT signalosome propagates signal branching to three major signaling pathways, the calcium, the mitogen-activated protein kinase (MAPK) kinase and the nuclear factor NF-kappa-B (NF-kB) pathways, leading to the mobilization of transcription factors that are critical for gene expression and essential for T cell growth and differentiation. The T cell repertoire is generated in the thymus, by V-(D)-J rearrangement. This repertoire is then shaped by intrathymic selection events to generate a peripheral T cell pool of self-MH restricted, non-autoaggressive T cells. Post-thymic interaction of alpha-beta TR with the pMH complexes shapes TR structural and functional avidity. The sequence is that of T cell receptor alpha variable 9-1 from Homo sapiens (Human).